A 439-amino-acid chain; its full sequence is Ribosomal protein uS12 methylthiotransferase RimO (439 aa).

The MTTase N-terminal domain occupies 5–116 (PTIAISHLGC…IVNVIERVEL (112 aa)). C14, C50, C79, C154, C158, and C161 together coordinate [4Fe-4S] cluster. Residues 140-369 (TTTEGVAYLR…MELQQPISQK (230 aa)) form the Radical SAM core domain. One can recognise a TRAM domain in the interval 372–438 (QQEVGKIVDV…TYDLYGQVVN (67 aa)).

This sequence belongs to the methylthiotransferase family. RimO subfamily. [4Fe-4S] cluster is required as a cofactor.

It is found in the cytoplasm. It catalyses the reaction L-aspartate(89)-[ribosomal protein uS12]-hydrogen + (sulfur carrier)-SH + AH2 + 2 S-adenosyl-L-methionine = 3-methylsulfanyl-L-aspartate(89)-[ribosomal protein uS12]-hydrogen + (sulfur carrier)-H + 5'-deoxyadenosine + L-methionine + A + S-adenosyl-L-homocysteine + 2 H(+). Functionally, catalyzes the methylthiolation of an aspartic acid residue of ribosomal protein uS12. In Nostoc punctiforme (strain ATCC 29133 / PCC 73102), this protein is Ribosomal protein uS12 methylthiotransferase RimO.